Reading from the N-terminus, the 172-residue chain is Adenylate kinase isoenzyme 6 (172 aa).

Residues Gly13, Gly15, Lys16, Thr17, and Thr18 each coordinate ATP. Positions 33–56 are NMPbind; sequence NVGDLAREGQLYDGYDEEYGCPIL. An LID region spans residues 108–118; the sequence is TRGYNEKKLQD. Arg109 provides a ligand contact to ATP.

This sequence belongs to the adenylate kinase family. AK6 subfamily. As to quaternary structure, monomer and homodimer. Interacts with small ribosomal subunit protein uS11. Not a structural component of 43S pre-ribosomes, but transiently interacts with them by binding to uS11. Interacts with COIL (via C-terminus).

The protein localises to the cytoplasm. It localises to the nucleus. It is found in the nucleoplasm. Its subcellular location is the cajal body. The catalysed reaction is AMP + ATP = 2 ADP. The enzyme catalyses ATP + H2O = ADP + phosphate + H(+). In terms of biological role, broad-specificity nucleoside monophosphate (NMP) kinase that catalyzes the reversible transfer of the terminal phosphate group between nucleoside triphosphates and monophosphates. Also has ATPase activity. Involved in the late cytoplasmic maturation steps of the 40S ribosomal particles, specifically 18S rRNA maturation. While NMP activity is not required for ribosome maturation, ATPase activity is. Associates transiently with small ribosomal subunit protein uS11. ATP hydrolysis breaks the interaction with uS11. May temporarily remove uS11 from the ribosome to enable a conformational change of the ribosomal RNA that is needed for the final maturation step of the small ribosomal subunit. Its NMP activity may have a role in nuclear energy homeostasis. May be involved in regulation of Cajal body (CB) formation. The sequence is that of Adenylate kinase isoenzyme 6 from Mus musculus (Mouse).